We begin with the raw amino-acid sequence, 101 residues long: Protein Tat (101 aa).

The tract at residues 1–24 is interaction with human CREBBP; sequence MEPVDPRLEPWKHPGSQPKTACTN. Residues 1 to 48 form a transactivation region; it reads MEPVDPRLEPWKHPGSQPKTACTNCYCKKCCFHCQVCFITKGLGISYG. Zn(2+) is bound by residues C22, C25, and C27. A cysteine-rich region spans residues 22–37; it reads CTNCYCKKCCFHCQVC. At K28 the chain carries N6-acetyllysine; by host PCAF. C30, H33, C34, and C37 together coordinate Zn(2+). The interval 38–48 is core; that stretch reads FITKGLGISYG. Basic residues predominate over residues 48 to 57; sequence GRKKRRQRRR. Residues 48–101 are disordered; that stretch reads GRKKRRQRRRAPPDSEVHQVSLPKQPASQPQGDPTGPKESKKKVERETETDPVH. Residues 49 to 57 carry the Nuclear localization signal, RNA-binding (TAR), and protein transduction motif; that stretch reads RKKRRQRRR. Residues 49 to 86 are interaction with the host capping enzyme RNGTT; it reads RKKRRQRRRAPPDSEVHQVSLPKQPASQPQGDPTGPKE. K50 and K51 each carry N6-acetyllysine; by host EP300 and GCN5L2. R52 and R53 each carry asymmetric dimethylarginine; by host PRMT6. K71 is covalently cross-linked (Glycyl lysine isopeptide (Lys-Gly) (interchain with G-Cter in ubiquitin)). Positions 83-101 are enriched in basic and acidic residues; it reads GPKESKKKVERETETDPVH.

The protein belongs to the lentiviruses Tat family. In terms of assembly, interacts with host CCNT1. Associates with the P-TEFb complex composed at least of Tat, P-TEFb (CDK9 and CCNT1), TAR RNA, RNA Pol II. Recruits the HATs CREBBP, TAF1/TFIID, EP300, PCAF and GCN5L2. Interacts with host KAT5/Tip60; this interaction targets the latter to degradation. Interacts with the host deacetylase SIRT1. Interacts with host capping enzyme RNGTT; this interaction stimulates RNGTT. Binds to host KDR, and to the host integrins ITGAV/ITGB3 and ITGA5/ITGB1. Interacts with host KPNB1/importin beta-1 without previous binding to KPNA1/importin alpha-1. Interacts with EIF2AK2. Interacts with host nucleosome assembly protein NAP1L1; this interaction may be required for the transport of Tat within the nucleus, since the two proteins interact at the nuclear rim. Interacts with host C1QBP/SF2P32; this interaction involves lysine-acetylated Tat. Interacts with the host chemokine receptors CCR2, CCR3 and CXCR4. Interacts with host DPP4/CD26; this interaction may trigger an anti-proliferative effect. Interacts with host LDLR. Interacts with the host extracellular matrix metalloproteinase MMP1. Interacts with host PRMT6; this interaction mediates Tat's methylation. Interacts with, and is ubiquitinated by MDM2/Hdm2. Interacts with host PSMC3 and HTATIP2. Interacts with STAB1; this interaction may overcome SATB1-mediated repression of IL2 and IL2RA (interleukin) in T cells by binding to the same domain than HDAC1. Interacts (when acetylated) with human CDK13, thereby increasing HIV-1 mRNA splicing and promoting the production of the doubly spliced HIV-1 protein Nef. Interacts with host TBP; this interaction modulates the activity of transcriptional pre-initiation complex. Interacts with host RELA. Interacts with host PLSCR1; this interaction negatively regulates Tat transactivation activity by altering its subcellular distribution. Asymmetrical arginine methylation by host PRMT6 seems to diminish the transactivation capacity of Tat and affects the interaction with host CCNT1. Post-translationally, acetylation by EP300, CREBBP, GCN5L2/GCN5 and PCAF regulates the transactivation activity of Tat. EP300-mediated acetylation of Lys-50 promotes dissociation of Tat from the TAR RNA through the competitive binding to PCAF's bromodomain. In addition, the non-acetylated Tat's N-terminus can also interact with PCAF. PCAF-mediated acetylation of Lys-28 enhances Tat's binding to CCNT1. Lys-50 is deacetylated by SIRT1. In terms of processing, polyubiquitination by host MDM2 does not target Tat to degradation, but activates its transactivation function and fosters interaction with CCNT1 and TAR RNA. Phosphorylated by EIF2AK2 on serine and threonine residues adjacent to the basic region important for TAR RNA binding and function. Phosphorylation of Tat by EIF2AK2 is dependent on the prior activation of EIF2AK2 by dsRNA.

The protein localises to the host nucleus. It is found in the host nucleolus. Its subcellular location is the host cytoplasm. It localises to the secreted. Its function is as follows. Transcriptional activator that increases RNA Pol II processivity, thereby increasing the level of full-length viral transcripts. Recognizes a hairpin structure at the 5'-LTR of the nascent viral mRNAs referred to as the transactivation responsive RNA element (TAR) and recruits the cyclin T1-CDK9 complex (P-TEFb complex) that will in turn hyperphosphorylate the RNA polymerase II to allow efficient elongation. The CDK9 component of P-TEFb and other Tat-activated kinases hyperphosphorylate the C-terminus of RNA Pol II that becomes stabilized and much more processive. Other factors such as HTATSF1/Tat-SF1, SUPT5H/SPT5, and HTATIP2 are also important for Tat's function. Besides its effect on RNA Pol II processivity, Tat induces chromatin remodeling of proviral genes by recruiting the histone acetyltransferases (HATs) CREBBP, EP300 and PCAF to the chromatin. This also contributes to the increase in proviral transcription rate, especially when the provirus integrates in transcriptionally silent region of the host genome. To ensure maximal activation of the LTR, Tat mediates nuclear translocation of NF-kappa-B by interacting with host RELA. Through its interaction with host TBP, Tat may also modulate transcription initiation. Tat can reactivate a latently infected cell by penetrating in it and transactivating its LTR promoter. In the cytoplasm, Tat is thought to act as a translational activator of HIV-1 mRNAs. In terms of biological role, extracellular circulating Tat can be endocytosed by surrounding uninfected cells via the binding to several surface receptors such as CD26, CXCR4, heparan sulfate proteoglycans (HSPG) or LDLR. Neurons are rarely infected, but they internalize Tat via their LDLR. Through its interaction with nuclear HATs, Tat is potentially able to control the acetylation-dependent cellular gene expression. Modulates the expression of many cellular genes involved in cell survival, proliferation or in coding for cytokines or cytokine receptors. Tat plays a role in T-cell and neurons apoptosis. Tat induced neurotoxicity and apoptosis probably contribute to neuroAIDS. Circulating Tat also acts as a chemokine-like and/or growth factor-like molecule that binds to specific receptors on the surface of the cells, affecting many cellular pathways. In the vascular system, Tat binds to ITGAV/ITGB3 and ITGA5/ITGB1 integrins dimers at the surface of endothelial cells and competes with bFGF for heparin-binding sites, leading to an excess of soluble bFGF. This is Protein Tat from Human immunodeficiency virus type 1 group M subtype B (isolate SF162) (HIV-1).